We begin with the raw amino-acid sequence, 311 residues long: Porphobilinogen deaminase (311 aa).

Position 245 is an S-(dipyrrolylmethanemethyl)cysteine (Cys-245).

It belongs to the HMBS family. Monomer. Dipyrromethane serves as cofactor.

It carries out the reaction 4 porphobilinogen + H2O = hydroxymethylbilane + 4 NH4(+). The protein operates within porphyrin-containing compound metabolism; protoporphyrin-IX biosynthesis; coproporphyrinogen-III from 5-aminolevulinate: step 2/4. In terms of biological role, tetrapolymerization of the monopyrrole PBG into the hydroxymethylbilane pre-uroporphyrinogen in several discrete steps. The polypeptide is Porphobilinogen deaminase (Acinetobacter baylyi (strain ATCC 33305 / BD413 / ADP1)).